A 119-amino-acid chain; its full sequence is Beta-2-microglobulin (119 aa).

An N-terminal signal peptide occupies residues 1–20; the sequence is MARFVVAALLVLLSLSGLEA. The Ig-like C1-type domain occupies 25–114; the sequence is PKIQVYSRHP…MTFPAPKTVK (90 aa). The cysteines at positions 45 and 100 are disulfide-linked.

It belongs to the beta-2-microglobulin family. Heterodimer of an alpha chain and a beta chain. Beta-2-microglobulin is the beta-chain of major histocompatibility complex class I molecules.

The protein localises to the secreted. In terms of biological role, component of the class I major histocompatibility complex (MHC). Involved in the presentation of peptide antigens to the immune system. The polypeptide is Beta-2-microglobulin (B2M) (Pithecia irrorata (Gray monk saki)).